The following is a 210-amino-acid chain: Glutathione S-transferase P 1 (210 aa).

The 80-residue stretch at 2 to 81 (PPYTIVYFPV…HLGRSLGLYG (80 aa)) folds into the GST N-terminal domain. Residue tyrosine 4 is modified to Phosphotyrosine; by EGFR. Residues tyrosine 8, arginine 14, tryptophan 39, lysine 45, and 52-53 (QL) each bind glutathione. A Phosphothreonine modification is found at threonine 62. 65–66 (QS) serves as a coordination point for glutathione. The 122-residue stretch at 83–204 (NQREAAQMDM…SSPEHVNRPI (122 aa)) folds into the GST C-terminal domain. An N6-succinyllysine mark is found at lysine 103 and lysine 116. At lysine 128 the chain carries N6-acetyllysine.

Homodimer. Interacts with CDK5. As to expression, ubiquitously expressed.

Its subcellular location is the cytoplasm. It is found in the mitochondrion. The protein localises to the nucleus. The catalysed reaction is RX + glutathione = an S-substituted glutathione + a halide anion + H(+). It catalyses the reaction prostaglandin J2 + glutathione = prostaglandin J2-S-(R)-glutathione. It carries out the reaction prostaglandin J2 + glutathione = prostaglandin J2-S-(S)-glutathione. The enzyme catalyses prostaglandin A2 + glutathione = prostaglandin A2-S-(S)-glutathione. The catalysed reaction is 11(S)-hydroxy-14(S),15(S)-epoxy-(5Z,8Z,12E)-eicosatrienoate + glutathione = (11S,15S)-dihydroxy-14(R)-S-glutathionyl-(5Z,8Z,12E)-eicosatrienoate. Conjugation of reduced glutathione to a wide number of exogenous and endogenous hydrophobic electrophiles. Involved in the formation of glutathione conjugates of both prostaglandin A2 (PGA2) and prostaglandin J2 (PGJ2). Participates in the formation of novel hepoxilin regioisomers. Negatively regulates CDK5 activity via p25/p35 translocation to prevent neurodegeneration. The sequence is that of Glutathione S-transferase P 1 from Mus musculus (Mouse).